The following is a 93-amino-acid chain: Small ribosomal subunit protein uS19 (93 aa).

The protein belongs to the universal ribosomal protein uS19 family.

In terms of biological role, protein S19 forms a complex with S13 that binds strongly to the 16S ribosomal RNA. This Maridesulfovibrio salexigens (strain ATCC 14822 / DSM 2638 / NCIMB 8403 / VKM B-1763) (Desulfovibrio salexigens) protein is Small ribosomal subunit protein uS19.